Here is a 549-residue protein sequence, read N- to C-terminus: MLNQKIQNPNPDELMIEVDLCYELDPYELKLDEMIEAEPEPEMIEGLPASDALTPADRYLELFEHVQSAKIFPDSKTFPDCAPKMDPLDILIRYRKVRRHRDFDLRKFVENHFWLPEVYSSEYVSDPQNSLKEHIDQLWPVLTREPQDHIPWSSLLALPQSYIVPGGRFSETYYWDSYFTMLGLAESGREDLLKCMADNFAWMIENYGHIPNGNRTYYLSRSQPPVFALMVELFEEDGVRGARRYLDHLKMEYAFWMDGAESLIPNQAYRHVVRMPDGSLLNRYWDDRDTPRDESWLEDVETAKHSGCPPNEVYRDLRAGAASGWDYSSRWLRDTGRLASIRTTQFIPIDLNAFLFKLESAIANISALKGEKETEALFRQKASARRDAVNRYLWDDENGIYRDYDWRREQLALFSAAAIVPLYVGMANHEQADRLANAVRSRLLTPGGILASEYETGEQWDKPNGWAPLQWMAIQGFKMYGDDLLGDEIARSWLKTVNQFYLEQHKMIEKYHIADGVPREGGGGEYPLQDGFGWTNGVVRRLIGLYGEP.

Substrate contacts are provided by residues Arg168, Trp175 to Asp176, Asn212, Arg221 to Gln223, Arg292 to Glu294, and Gly324. Catalysis depends on proton donor/acceptor residues Asp326 and Glu509. Glu525 serves as a coordination point for substrate.

Belongs to the glycosyl hydrolase 37 family. In terms of assembly, monomer.

The protein resides in the cytoplasm. It carries out the reaction alpha,alpha-trehalose + H2O = alpha-D-glucose + beta-D-glucose. It participates in glycan degradation; trehalose degradation; D-glucose from alpha,alpha-trehalose: step 1/1. Its function is as follows. Hydrolyzes trehalose to glucose. Could be involved, in cells returning to low osmolarity conditions, in the utilization of the accumulated cytoplasmic trehalose, which was synthesized in response to high osmolarity. The chain is Cytoplasmic trehalase from Shigella flexneri serotype 5b (strain 8401).